Reading from the N-terminus, the 474-residue chain is UDP-N-acetylmuramoylalanine--D-glutamate ligase (474 aa).

134–140 is an ATP binding site; sequence GSNGKST.

The protein belongs to the MurCDEF family.

The protein localises to the cytoplasm. It carries out the reaction UDP-N-acetyl-alpha-D-muramoyl-L-alanine + D-glutamate + ATP = UDP-N-acetyl-alpha-D-muramoyl-L-alanyl-D-glutamate + ADP + phosphate + H(+). Its pathway is cell wall biogenesis; peptidoglycan biosynthesis. Its function is as follows. Cell wall formation. Catalyzes the addition of glutamate to the nucleotide precursor UDP-N-acetylmuramoyl-L-alanine (UMA). The protein is UDP-N-acetylmuramoylalanine--D-glutamate ligase of Thiobacillus denitrificans (strain ATCC 25259 / T1).